Reading from the N-terminus, the 428-residue chain is 4-hydroxy-3-methylbut-2-en-1-yl diphosphate synthase (flavodoxin) (428 aa).

The [4Fe-4S] cluster site is built by Cys-315, Cys-318, Cys-361, and Glu-368.

Belongs to the IspG family. Requires [4Fe-4S] cluster as cofactor.

The catalysed reaction is (2E)-4-hydroxy-3-methylbut-2-enyl diphosphate + oxidized [flavodoxin] + H2O + 2 H(+) = 2-C-methyl-D-erythritol 2,4-cyclic diphosphate + reduced [flavodoxin]. Its pathway is isoprenoid biosynthesis; isopentenyl diphosphate biosynthesis via DXP pathway; isopentenyl diphosphate from 1-deoxy-D-xylulose 5-phosphate: step 5/6. Functionally, converts 2C-methyl-D-erythritol 2,4-cyclodiphosphate (ME-2,4cPP) into 1-hydroxy-2-methyl-2-(E)-butenyl 4-diphosphate. This is 4-hydroxy-3-methylbut-2-en-1-yl diphosphate synthase (flavodoxin) from Ralstonia pickettii (strain 12J).